A 469-amino-acid polypeptide reads, in one-letter code: Glutamate--tRNA ligase (469 aa).

Residues Pro-9–Gly-19 carry the 'HIGH' region motif. Positions Lys-236–Arg-240 match the 'KMSKS' region motif. Position 239 (Lys-239) interacts with ATP.

The protein belongs to the class-I aminoacyl-tRNA synthetase family. Glutamate--tRNA ligase type 1 subfamily. As to quaternary structure, monomer.

The protein resides in the cytoplasm. The catalysed reaction is tRNA(Glu) + L-glutamate + ATP = L-glutamyl-tRNA(Glu) + AMP + diphosphate. Its function is as follows. Catalyzes the attachment of glutamate to tRNA(Glu) in a two-step reaction: glutamate is first activated by ATP to form Glu-AMP and then transferred to the acceptor end of tRNA(Glu). This Pseudoalteromonas atlantica (strain T6c / ATCC BAA-1087) protein is Glutamate--tRNA ligase.